Consider the following 233-residue polypeptide: Outer membrane protein MIP (233 aa).

Positions 1-20 are cleaved as a signal peptide; that stretch reads MKMKLVTAAIMGLAMSTAMA. A PPIase FKBP-type domain is found at 144–233; that stretch reads SDTVTVEYTG…IHLISVKKAA (90 aa).

The protein belongs to the FKBP-type PPIase family.

It localises to the cell outer membrane. It catalyses the reaction [protein]-peptidylproline (omega=180) = [protein]-peptidylproline (omega=0). Its activity is regulated as follows. Strongly inhibited by FK506 but is completely resistant to cyclosporin A. In terms of biological role, essential virulence factor associated with macrophage infectivity. Exhibits PPIase activity. This chain is Outer membrane protein MIP (mip), found in Legionella longbeachae.